Consider the following 382-residue polypeptide: Galactokinase (382 aa).

Substrate is bound at residue 34 to 37 (EHTD). 124 to 130 (GAGLSSS) is an ATP binding site. Residues Ser130 and Glu162 each coordinate Mg(2+). Residue Asp174 is the Proton acceptor of the active site. Tyr223 provides a ligand contact to substrate.

It belongs to the GHMP kinase family. GalK subfamily.

Its subcellular location is the cytoplasm. It carries out the reaction alpha-D-galactose + ATP = alpha-D-galactose 1-phosphate + ADP + H(+). Its pathway is carbohydrate metabolism; galactose metabolism. Its function is as follows. Catalyzes the transfer of the gamma-phosphate of ATP to D-galactose to form alpha-D-galactose-1-phosphate (Gal-1-P). This is Galactokinase from Citrobacter koseri (strain ATCC BAA-895 / CDC 4225-83 / SGSC4696).